A 145-amino-acid polypeptide reads, in one-letter code: uncharacterized protein (145 aa).

4 helical membrane passes run 1-21, 28-48, 54-74, and 96-116; these read MELF…YFLI, TVLI…MGAL, SMTS…AYVM, and FFLI…IPSA.

The protein belongs to the DcuC/DcuD transporter (TC 2.A.61) family.

The protein localises to the cell membrane. This is an uncharacterized protein from Haemophilus influenzae (strain ATCC 51907 / DSM 11121 / KW20 / Rd).